The primary structure comprises 223 residues: Urease accessory protein UreF (223 aa).

It belongs to the UreF family. In terms of assembly, ureD, UreF and UreG form a complex that acts as a GTP-hydrolysis-dependent molecular chaperone, activating the urease apoprotein by helping to assemble the nickel containing metallocenter of UreC. The UreE protein probably delivers the nickel.

It localises to the cytoplasm. Required for maturation of urease via the functional incorporation of the urease nickel metallocenter. The polypeptide is Urease accessory protein UreF (Pseudomonas paraeruginosa (strain DSM 24068 / PA7) (Pseudomonas aeruginosa (strain PA7))).